A 201-amino-acid chain; its full sequence is Ribonuclease HII (201 aa).

The RNase H type-2 domain maps to 10-200 (LIEAGCDEAG…LGDGQLELFS (191 aa)). A divalent metal cation-binding residues include aspartate 16, glutamate 17, and aspartate 108.

The protein belongs to the RNase HII family. The cofactor is Mn(2+). Mg(2+) serves as cofactor.

It is found in the cytoplasm. It carries out the reaction Endonucleolytic cleavage to 5'-phosphomonoester.. Functionally, endonuclease that specifically degrades the RNA of RNA-DNA hybrids. In Bacteroides fragilis (strain ATCC 25285 / DSM 2151 / CCUG 4856 / JCM 11019 / LMG 10263 / NCTC 9343 / Onslow / VPI 2553 / EN-2), this protein is Ribonuclease HII.